Consider the following 104-residue polypeptide: Ribonuclease P protein component 4 (104 aa).

Residues C57, C60, C83, and C86 each coordinate Zn(2+).

This sequence belongs to the eukaryotic/archaeal RNase P protein component 4 family. In terms of assembly, consists of a catalytic RNA component and at least 4-5 protein subunits. Requires Zn(2+) as cofactor.

The protein resides in the cytoplasm. It catalyses the reaction Endonucleolytic cleavage of RNA, removing 5'-extranucleotides from tRNA precursor.. Part of ribonuclease P, a protein complex that generates mature tRNA molecules by cleaving their 5'-ends. This chain is Ribonuclease P protein component 4, found in Saccharolobus islandicus (strain M.14.25 / Kamchatka #1) (Sulfolobus islandicus).